We begin with the raw amino-acid sequence, 599 residues long: NADH-quinone oxidoreductase subunit C/D (599 aa).

The interval 1-190 (MMIDQIAQES…DPFELTRQKE (190 aa)) is NADH dehydrogenase I subunit C. The NADH dehydrogenase I subunit D stretch occupies residues 214 to 599 (DFMFLNLGPN…IDFVMSDVDR (386 aa)).

This sequence in the N-terminal section; belongs to the complex I 30 kDa subunit family. It in the C-terminal section; belongs to the complex I 49 kDa subunit family. NDH-1 is composed of 13 different subunits. Subunits NuoB, CD, E, F, and G constitute the peripheral sector of the complex.

It localises to the cell inner membrane. The enzyme catalyses a quinone + NADH + 5 H(+)(in) = a quinol + NAD(+) + 4 H(+)(out). In terms of biological role, NDH-1 shuttles electrons from NADH, via FMN and iron-sulfur (Fe-S) centers, to quinones in the respiratory chain. The immediate electron acceptor for the enzyme in this species is believed to be ubiquinone. Couples the redox reaction to proton translocation (for every two electrons transferred, four hydrogen ions are translocated across the cytoplasmic membrane), and thus conserves the redox energy in a proton gradient. The protein is NADH-quinone oxidoreductase subunit C/D of Photorhabdus laumondii subsp. laumondii (strain DSM 15139 / CIP 105565 / TT01) (Photorhabdus luminescens subsp. laumondii).